The sequence spans 430 residues: Acetyl-CoA acetyltransferase FG05087, mitochondrial (430 aa).

A mitochondrion-targeting transit peptide spans 1-32 (MTVTQLRSAGRLAQLAGHVNGARQFSTRPALR). Cys122 serves as the catalytic Acyl-thioester intermediate. Position 217 (Tyr217) interacts with K(+). Lys260 is a CoA binding site. Ala278 is a K(+) binding site. A CoA-binding site is contributed by Ser282. Active-site proton acceptor residues include His385 and Cys413. Asn414 is a chloride binding site.

The protein belongs to the thiolase-like superfamily. Thiolase family. Homotetramer. K(+) serves as cofactor.

The protein resides in the mitochondrion. It catalyses the reaction 2 acetyl-CoA = acetoacetyl-CoA + CoA. Mitochondrial acetyl-CoA acetyltransferase that catalyzes both the formation and degradation of acetoacetyl-CoA. Seems not to be involved in ergosterol biosynthesis. Plays an important role in growth, morphogenesis and maintaining mitochondrial function including the response to oxidative stresses. The sequence is that of Acetyl-CoA acetyltransferase FG05087, mitochondrial from Gibberella zeae (strain ATCC MYA-4620 / CBS 123657 / FGSC 9075 / NRRL 31084 / PH-1) (Wheat head blight fungus).